The following is an 837-amino-acid chain: Protein translocase subunit SecA (837 aa).

Residues glutamine 87, 105-109 (GEGKT), and aspartate 494 contribute to the ATP site. Residues 788–837 (HKESKSDLEYSDSENTETKKKPKRRSEPKVGRNDPCPCGSGKKYKKCCGK) are disordered. Zn(2+)-binding residues include cysteine 823, cysteine 825, cysteine 834, and cysteine 835.

It belongs to the SecA family. Monomer and homodimer. Part of the essential Sec protein translocation apparatus which comprises SecA, SecYEG and auxiliary proteins SecDF-YajC and YidC. Zn(2+) is required as a cofactor.

The protein localises to the cell inner membrane. The protein resides in the cytoplasm. It catalyses the reaction ATP + H2O + cellular proteinSide 1 = ADP + phosphate + cellular proteinSide 2.. Functionally, part of the Sec protein translocase complex. Interacts with the SecYEG preprotein conducting channel. Has a central role in coupling the hydrolysis of ATP to the transfer of proteins into and across the cell membrane, serving as an ATP-driven molecular motor driving the stepwise translocation of polypeptide chains across the membrane. In Maridesulfovibrio salexigens (strain ATCC 14822 / DSM 2638 / NCIMB 8403 / VKM B-1763) (Desulfovibrio salexigens), this protein is Protein translocase subunit SecA.